Consider the following 383-residue polypeptide: UDP-N-acetylglucosamine--N-acetylmuramyl-(pentapeptide) pyrophosphoryl-undecaprenol N-acetylglucosamine transferase (383 aa).

UDP-N-acetyl-alpha-D-glucosamine contacts are provided by residues 11–13 (TGG), Asn-125, Arg-166, Ser-191, Ile-246, and Gln-291. The tract at residues 364–383 (PNGRERTPIEAEKKAPRSNS) is disordered. Residues 366–383 (GRERTPIEAEKKAPRSNS) are compositionally biased toward basic and acidic residues.

This sequence belongs to the glycosyltransferase 28 family. MurG subfamily.

It localises to the cell inner membrane. The catalysed reaction is di-trans,octa-cis-undecaprenyl diphospho-N-acetyl-alpha-D-muramoyl-L-alanyl-D-glutamyl-meso-2,6-diaminopimeloyl-D-alanyl-D-alanine + UDP-N-acetyl-alpha-D-glucosamine = di-trans,octa-cis-undecaprenyl diphospho-[N-acetyl-alpha-D-glucosaminyl-(1-&gt;4)]-N-acetyl-alpha-D-muramoyl-L-alanyl-D-glutamyl-meso-2,6-diaminopimeloyl-D-alanyl-D-alanine + UDP + H(+). Its pathway is cell wall biogenesis; peptidoglycan biosynthesis. Its function is as follows. Cell wall formation. Catalyzes the transfer of a GlcNAc subunit on undecaprenyl-pyrophosphoryl-MurNAc-pentapeptide (lipid intermediate I) to form undecaprenyl-pyrophosphoryl-MurNAc-(pentapeptide)GlcNAc (lipid intermediate II). The protein is UDP-N-acetylglucosamine--N-acetylmuramyl-(pentapeptide) pyrophosphoryl-undecaprenol N-acetylglucosamine transferase of Myxococcus xanthus (strain DK1622).